The primary structure comprises 256 residues: MKHSNKPYDSFQDELEDYIKVQKARGLEPKTCFRRMRGEYLESCGYREEFDSRPRYRMFDQRLPSGTNHSYPRSCSSSQTEDRVPQWLPAHDKIRLNSLSYCQFTRDGFSEKPVPLNLSQQEYNCGSYSVESVVHKRLCSEHSTIDPQVSHRQMHQKRKKHVEEGREKQEERPKHERKRSSEEMDLNKHRSIQRKKTKAETETVQDGTEKLKNRKEKKTRDVSSKKEDRKRRKEKKEQGEERTEEEMLWDQSILGF.

Disordered regions lie at residues 62-84 (RLPS…EDRV) and 144-256 (TIDP…ILGF). Positions 64-79 (PSGTNHSYPRSCSSSQ) are enriched in polar residues. Basic and acidic residues-rich tracts occupy residues 161 to 188 (HVEE…DLNK) and 218 to 227 (KTRDVSSKKE). A coiled-coil region spans residues 209-247 (EKLKNRKEKKTRDVSSKKEDRKRRKEKKEQGEERTEEEM).

This chain is Lysine-rich coiled-coil protein 1 (Krcc1), found in Mus musculus (Mouse).